We begin with the raw amino-acid sequence, 113 residues long: uncharacterized protein (113 aa).

Residues 41 to 88 (DWHHHPDSDELFIVLEGELLIDFKDKETAVLKANDSLLIPKGTVHRTR) form the Cupin type-2 domain.

This sequence belongs to the SchB/CurC family.

This is an uncharacterized protein from Bacillus subtilis (strain 168).